The following is a 304-amino-acid chain: Voltage-dependent anion channel-forming protein YneE (304 aa).

The next 4 membrane-spanning stretches (helical) occupy residues 28–48 (LLLNFLFSIAVIFMLPWYTHL), 50–70 (IKFTLAPFSILGVAIAIFLGF), 194–214 (VLAGCERIAYTPIPFAYTLIL), and 220–240 (LFCIMLPFALVVDLHYMTPFI).

It belongs to the anion channel-forming bestrophin (TC 1.A.46) family.

It is found in the cell membrane. In Escherichia coli (strain K12), this protein is Voltage-dependent anion channel-forming protein YneE (yneE).